We begin with the raw amino-acid sequence, 157 residues long: UPF0178 protein Nwi_2152 (157 aa).

It belongs to the UPF0178 family.

This chain is UPF0178 protein Nwi_2152, found in Nitrobacter winogradskyi (strain ATCC 25391 / DSM 10237 / CIP 104748 / NCIMB 11846 / Nb-255).